Reading from the N-terminus, the 890-residue chain is Translation initiation factor IF-2 (890 aa).

The interval 45–304 (LIDHLNQKNS…LQQGFQKPAQ (260 aa)) is disordered. The segment covering 67 to 81 (STLNIPGTGGKSKSV) has biased composition (polar residues). A compositionally biased stretch (basic and acidic residues) spans 92–217 (VKRDPQEAER…RMAEENKWID (126 aa)). Basic residues predominate over residues 252–266 (GRGRNAKAARPKKGN). Residues 267–280 (KHAESKADREEARA) show a composition bias toward basic and acidic residues. Positions 389–558 (PRAPVVTIMG…LLQAEVLELK (170 aa)) constitute a tr-type G domain. Residues 398–405 (GHVDHGKT) form a G1 region. 398–405 (GHVDHGKT) is a GTP binding site. Residues 423–427 (GITQH) are G2. The tract at residues 444–447 (DTPG) is G3. GTP contacts are provided by residues 444-448 (DTPGH) and 498-501 (NKID). The interval 498–501 (NKID) is G4. Residues 534–536 (SAK) are G5. Lysine 808 bears the N6-acetyllysine mark.

It belongs to the TRAFAC class translation factor GTPase superfamily. Classic translation factor GTPase family. IF-2 subfamily.

The protein localises to the cytoplasm. Its function is as follows. One of the essential components for the initiation of protein synthesis. Protects formylmethionyl-tRNA from spontaneous hydrolysis and promotes its binding to the 30S ribosomal subunits. Also involved in the hydrolysis of GTP during the formation of the 70S ribosomal complex. This is Translation initiation factor IF-2 from Escherichia coli O81 (strain ED1a).